Reading from the N-terminus, the 70-residue chain is Small ribosomal subunit protein bS21B (70 aa).

The protein belongs to the bacterial ribosomal protein bS21 family.

The protein is Small ribosomal subunit protein bS21B (rpsU2) of Rhizobium meliloti (strain 1021) (Ensifer meliloti).